We begin with the raw amino-acid sequence, 281 residues long: Voltage-dependent L-type calcium channel subunit alpha-1S (281 aa).

The III repeat unit spans residues Val-1–Phe-8. A dihydropyridine binding region spans residues Val-1–Lys-17. An IV repeat occupies Asn-45–Tyr-281. A helical membrane pass occupies residues Tyr-59 to Tyr-80. An N-linked (GlcNAc...) asparagine glycan is attached at Asn-81. A helical membrane pass occupies residues Val-89–Met-110. Residues Pro-121–Ser-140 form a helical membrane-spanning segment. The chain crosses the membrane as a helical span at residues Ile-153–Gly-171. The chain crosses the membrane as a helical span at residues Tyr-190 to Phe-210. The pore-forming intramembrane region spans Ala-233–Leu-251. Positions Thr-242–Ala-245 match the Selectivity filter of repeat IV motif. Positions Arg-258 to Tyr-281 are dihydropyridine binding. Cys-259 and Cys-273 form a disulfide bridge. Positions Glu-270–Tyr-281 are phenylalkylamine binding.

This sequence belongs to the calcium channel alpha-1 subunit (TC 1.A.1.11) family. CACNA1S subfamily. In terms of assembly, component of a calcium channel complex consisting of a pore-forming alpha subunit (CACNA1S) and the ancillary subunits CACNB1 or CACNB2, CACNG1 and CACNA2D1. The channel complex contains alpha, beta, gamma and delta subunits in a 1:1:1:1 ratio, i.e. it contains either CACNB1 or CACNB2. CACNA1S channel activity is modulated by the auxiliary subunits (CACNB1 or CACNB2, CACNG1 and CACNA2D1). Interacts with DYSF and JSRP1. Interacts with RYR1. Interacts with CALM. In terms of processing, the alpha-1S subunit is found in two isoforms in the skeletal muscle: a minor form of 212 kDa containing the complete amino acid sequence, and a major form of 190 kDa derived from the full-length form by post-translational proteolysis close to Phe-1690. Post-translationally, both the minor and major forms are phosphorylated in vitro by PKA. Phosphorylation by PKA activates the calcium channel.

The protein localises to the cell membrane. It localises to the sarcolemma. It is found in the T-tubule. It catalyses the reaction Ca(2+)(in) = Ca(2+)(out). Its activity is regulated as follows. Channel activity is blocked by dihydropyridines (DHP), phenylalkylamines, and by benzothiazepines. In terms of biological role, pore-forming, alpha-1S subunit of the voltage-gated calcium channel that gives rise to L-type calcium currents in skeletal muscle. Calcium channels containing the alpha-1S subunit play an important role in excitation-contraction coupling in skeletal muscle via their interaction with RYR1, which triggers Ca(2+) release from the sarcplasmic reticulum and ultimately results in muscle contraction. Long-lasting (L-type) calcium channels belong to the 'high-voltage activated' (HVA) group. This chain is Voltage-dependent L-type calcium channel subunit alpha-1S (CACNA1S), found in Gallus gallus (Chicken).